The sequence spans 164 residues: CB1 cannabinoid receptor-interacting protein 1 (164 aa).

It belongs to the CNRIP family. Interacts with the cannabinoid receptor CNR1 (via C-terminus). Does not interact with cannabinoid receptor CNR2. In terms of tissue distribution, highly expressed in brain. Also detected in heart, lung, intestine, kidney, testis, spleen, liver and muscle (at protein level).

Suppresses cannabinoid receptor CNR1-mediated tonic inhibition of voltage-gated calcium channels. This is CB1 cannabinoid receptor-interacting protein 1 (Cnrip1) from Mus musculus (Mouse).